The chain runs to 1131 residues: Kinesin-like protein CG14535 (1131 aa).

The segment covering M1–R11 has biased composition (polar residues). Residues M1–P25 form a disordered region. Residues K44–L396 form the Kinesin motor domain. Disordered regions lie at residues A472–K494, D693–I753, P905–L926, and T1016–R1072. Residues S483–K494 are compositionally biased toward low complexity. The span at T1016 to R1032 shows a compositional bias: polar residues.

It belongs to the TRAFAC class myosin-kinesin ATPase superfamily. Kinesin family. KIF26 subfamily.

Its subcellular location is the cytoplasm. The protein resides in the cytoskeleton. The polypeptide is Kinesin-like protein CG14535 (Drosophila melanogaster (Fruit fly)).